A 149-amino-acid polypeptide reads, in one-letter code: Sperm surface protein Sp17 (149 aa).

The span at 83–96 shows a compositional bias: basic and acidic residues; it reads CEQELAKSSGREET. Positions 83 to 114 are disordered; the sequence is CEQELAKSSGREETPVTPFEESTEEEREQEEA. Over residues 103–113 the composition is skewed to acidic residues; sequence ESTEEEREQEE. Residues 112–141 form the IQ domain; it reads EEAAALKIQSLFRGHVAREEVKKMKSDKNE.

As to quaternary structure, homodimer. May interact with ROPN1. In terms of tissue distribution, testis- and sperm-specific.

It is found in the membrane. In terms of biological role, sperm surface zona pellucida binding protein. Helps to bind spermatozoa to the zona pellucida with high affinity. Might function in binding zona pellucida and carbohydrates. The chain is Sperm surface protein Sp17 (Spa17) from Mus musculus (Mouse).